Reading from the N-terminus, the 352-residue chain is Dihydrorhizobitoxine desaturase (352 aa).

A run of 3 helical transmembrane segments spans residues 53 to 73 (LATL…IGAY), 89 to 109 (LAKN…YPLF), and 204 to 224 (IGIL…LFWI).

The protein belongs to the fatty acid desaturase type 1 family.

It is found in the cell inner membrane. The enzyme catalyses dihydrorhizobitoxine + 2 reduced [2Fe-2S]-[ferredoxin] + O2 + 2 H(+) = rhizobitoxine + 2 oxidized [2Fe-2S]-[ferredoxin] + 2 H2O. Involved in the biosynthesis of the nodulation enhancer compound rhizobitoxine. Catalyzes the final step of the pathway, the introduction of a carbon double bond into the C3 position of dihydrorhizobitoxine to produce rhizobitoxine. The sequence is that of Dihydrorhizobitoxine desaturase from Bradyrhizobium elkanii.